Reading from the N-terminus, the 117-residue chain is Large ribosomal subunit protein uL18 (117 aa).

Belongs to the universal ribosomal protein uL18 family. In terms of assembly, part of the 50S ribosomal subunit; part of the 5S rRNA/L5/L18/L25 subcomplex. Contacts the 5S and 23S rRNAs.

This is one of the proteins that bind and probably mediate the attachment of the 5S RNA into the large ribosomal subunit, where it forms part of the central protuberance. This Pasteurella multocida (strain Pm70) protein is Large ribosomal subunit protein uL18.